Reading from the N-terminus, the 154-residue chain is 3-dehydroquinate dehydratase (154 aa).

Tyr-23 (proton acceptor) is an active-site residue. Substrate-binding residues include Asn-74, His-80, and Asp-87. The active-site Proton donor is the His-100. Residues 101–102 and Arg-111 contribute to the substrate site; that span reads LS.

Belongs to the type-II 3-dehydroquinase family. Homododecamer.

It carries out the reaction 3-dehydroquinate = 3-dehydroshikimate + H2O. It functions in the pathway metabolic intermediate biosynthesis; chorismate biosynthesis; chorismate from D-erythrose 4-phosphate and phosphoenolpyruvate: step 3/7. Catalyzes a trans-dehydration via an enolate intermediate. The sequence is that of 3-dehydroquinate dehydratase from Actinobacillus pleuropneumoniae serotype 5b (strain L20).